The sequence spans 525 residues: Cytochrome P450 4V2 (525 aa).

Residues 14 to 34 (LLWGAASAVSLAGATILISIF) traverse the membrane as a helical segment. 2 residues coordinate heme: glutamate 329 and cysteine 467.

The protein belongs to the cytochrome P450 family. The cofactor is heme.

Its subcellular location is the endoplasmic reticulum membrane. It catalyses the reaction dodecanoate + reduced [NADPH--hemoprotein reductase] + O2 = 12-hydroxydodecanoate + oxidized [NADPH--hemoprotein reductase] + H2O + H(+). The enzyme catalyses tetradecanoate + reduced [NADPH--hemoprotein reductase] + O2 = 14-hydroxytetradecanoate + oxidized [NADPH--hemoprotein reductase] + H2O + H(+). It carries out the reaction hexadecanoate + reduced [NADPH--hemoprotein reductase] + O2 = 16-hydroxyhexadecanoate + oxidized [NADPH--hemoprotein reductase] + H2O + H(+). The catalysed reaction is (5Z,8Z,11Z,14Z,17Z)-eicosapentaenoate + reduced [NADPH--hemoprotein reductase] + O2 = 20-hydroxy-(5Z,8Z,11Z,14Z,17Z)-eicosapentaenoate + oxidized [NADPH--hemoprotein reductase] + H2O + H(+). It catalyses the reaction (4Z,7Z,10Z,13Z,16Z,19Z)-docosahexaenoate + reduced [NADPH--hemoprotein reductase] + O2 = 22-hydroxy-(4Z,7Z,10Z,13Z,16Z,19Z)-docosahexaenoate + oxidized [NADPH--hemoprotein reductase] + H2O + H(+). The protein operates within lipid metabolism; fatty acid metabolism. Inhibited by N-hydroxy-N'-(4-n-butyl-2-methylphenyl formamidine)(HET0016) with an IC(50) of 38 nM. Its function is as follows. A cytochrome P450 monooxygenase involved in fatty acid metabolism in the eye. Catalyzes the omega-hydroxylation of polyunsaturated fatty acids (PUFAs) docosahexaenoate (DHA) and its precursor eicosapentaenoate (EPA), and may contribute to the homeostasis of these retinal PUFAs. Omega hydroxylates saturated fatty acids such as laurate, myristate and palmitate, the catalytic efficiency decreasing in the following order: myristate &gt; laurate &gt; palmitate (C14&gt;C12&gt;C16). Mechanistically, uses molecular oxygen inserting one oxygen atom into a substrate, and reducing the second into a water molecule, with two electrons provided by NADPH via cytochrome P450 reductase (CPR; NADPH-ferrihemoprotein reductase). This chain is Cytochrome P450 4V2 (Cyp4v2), found in Mus musculus (Mouse).